The primary structure comprises 450 residues: Enolase (450 aa).

Q173 serves as a coordination point for (2R)-2-phosphoglycerate. E215 acts as the Proton donor in catalysis. 3 residues coordinate Mg(2+): D254, E308, and D335. The (2R)-2-phosphoglycerate site is built by K360, R389, S390, and K411. K360 serves as the catalytic Proton acceptor.

Belongs to the enolase family. The cofactor is Mg(2+).

Its subcellular location is the cytoplasm. It is found in the secreted. The protein resides in the cell surface. It catalyses the reaction (2R)-2-phosphoglycerate = phosphoenolpyruvate + H2O. It participates in carbohydrate degradation; glycolysis; pyruvate from D-glyceraldehyde 3-phosphate: step 4/5. Functionally, catalyzes the reversible conversion of 2-phosphoglycerate (2-PG) into phosphoenolpyruvate (PEP). It is essential for the degradation of carbohydrates via glycolysis. This is Enolase from Malacoplasma penetrans (strain HF-2) (Mycoplasma penetrans).